Here is a 54-residue protein sequence, read N- to C-terminus: Ovomucoid (54 aa).

In terms of domain architecture, Kazal-like spans 4–54 (VDCSDYPRPDCTLEYMPLCGSDNKTYGNKCNFCNAVVDSNGTLTLSHFGKC). 3 disulfide bridges follow: Cys-6–Cys-36, Cys-14–Cys-33, and Cys-22–Cys-54. N-linked (GlcNAc...) asparagine glycosylation occurs at Asn-43.

Its subcellular location is the secreted. The polypeptide is Ovomucoid (Dendrocygna eytoni (Plumed whistling-duck)).